The following is a 568-amino-acid chain: Oxygen-dependent choline dehydrogenase (568 aa).

An FAD-binding site is contributed by Asp6 to Glu35. The Proton acceptor role is filled by His470.

The protein belongs to the GMC oxidoreductase family. FAD is required as a cofactor.

It carries out the reaction choline + A = betaine aldehyde + AH2. The enzyme catalyses betaine aldehyde + NAD(+) + H2O = glycine betaine + NADH + 2 H(+). It functions in the pathway amine and polyamine biosynthesis; betaine biosynthesis via choline pathway; betaine aldehyde from choline (cytochrome c reductase route): step 1/1. Functionally, involved in the biosynthesis of the osmoprotectant glycine betaine. Catalyzes the oxidation of choline to betaine aldehyde and betaine aldehyde to glycine betaine at the same rate. The chain is Oxygen-dependent choline dehydrogenase from Photobacterium profundum (strain SS9).